We begin with the raw amino-acid sequence, 567 residues long: Urease subunit alpha (567 aa).

The Urease domain maps to 128-567; the sequence is GGVDTHVHYI…LPLAQRYHLF (440 aa). Residues His-133, His-135, and Lys-216 each coordinate Ni(2+). Lys-216 carries the post-translational modification N6-carboxylysine. His-218 is a binding site for substrate. Ni(2+) is bound by residues His-245 and His-271. His-319 (proton donor) is an active-site residue. A Ni(2+)-binding site is contributed by Asp-359.

Belongs to the metallo-dependent hydrolases superfamily. Urease alpha subunit family. Heterotrimer of UreA (gamma), UreB (beta) and UreC (alpha) subunits. Three heterotrimers associate to form the active enzyme. Ni cation is required as a cofactor. Carboxylation allows a single lysine to coordinate two nickel ions.

The protein resides in the cytoplasm. The enzyme catalyses urea + 2 H2O + H(+) = hydrogencarbonate + 2 NH4(+). The protein operates within nitrogen metabolism; urea degradation; CO(2) and NH(3) from urea (urease route): step 1/1. The protein is Urease subunit alpha of Pseudoalteromonas translucida (strain TAC 125).